The sequence spans 136 residues: Ribosome-binding factor A (136 aa).

It belongs to the RbfA family. In terms of assembly, monomer. Binds 30S ribosomal subunits, but not 50S ribosomal subunits or 70S ribosomes.

The protein resides in the cytoplasm. One of several proteins that assist in the late maturation steps of the functional core of the 30S ribosomal subunit. Associates with free 30S ribosomal subunits (but not with 30S subunits that are part of 70S ribosomes or polysomes). Required for efficient processing of 16S rRNA. May interact with the 5'-terminal helix region of 16S rRNA. This is Ribosome-binding factor A from Rhodopseudomonas palustris (strain BisB5).